The chain runs to 514 residues: G-protein coupled receptor Mth (514 aa).

The first 24 residues, 1–24, serve as a signal peptide directing secretion; that stretch reads MKTLLVLRISTVILVVLVIQKSYA. The Extracellular portion of the chain corresponds to 25-218; that stretch reads DILECDYFDT…CLIVPSITGQ (194 aa). Intrachain disulfides connect Cys-29–Cys-83, Cys-85–Cys-90, Cys-94–Cys-188, Cys-95–Cys-106, and Cys-150–Cys-209. Asn-45 carries an N-linked (GlcNAc...) asparagine glycan. N-linked (GlcNAc...) asparagine glycosylation is found at Asn-109, Asn-123, Asn-170, and Asn-198. The helical transmembrane segment at 219-239 threads the bilayer; it reads TVVMISSLICMVLTIAVYLFV. The Cytoplasmic portion of the chain corresponds to 240 to 248; sequence KKLQNLHGK. Residues 249 to 269 form a helical membrane-spanning segment; that stretch reads CFICYMVCLFMGYLFLLLDLW. Topologically, residues 270–278 are extracellular; the sequence is QISISFCKP. The chain crosses the membrane as a helical span at residues 279 to 299; the sequence is AGFLGYFFVMAAFFWLSVISL. Residues 300–320 lie on the Cytoplasmic side of the membrane; that stretch reads HLWNTFRGSSHKANRFLFEHR. The chain crosses the membrane as a helical span at residues 321–341; sequence FLAYNTYAWGMAVVLTGITVL. Residues 342-370 are Extracellular-facing; that stretch reads ADNIVENQDWNPRVGHEGHCWIYTQAWSA. The helical transmembrane segment at 371-391 threads the bilayer; the sequence is MLYFYGPMVFLIAFNITMFIL. At 392-424 the chain is on the cytoplasmic side; sequence TAKRILGVKKDIQNFAHRQERKQKLNSDKQTYT. A helical transmembrane segment spans residues 425–445; that stretch reads FFLRLFIIMGLSWSLEIGSYF. Residues 446–454 are Extracellular-facing; sequence SQSNQTWAN. Asn-449 carries N-linked (GlcNAc...) asparagine glycosylation. The helical transmembrane segment at 455–475 threads the bilayer; it reads VFLVADYLNWSQGIIIFILFV. Residues 476-514 are Cytoplasmic-facing; sequence LKRSTWRLLQESIRGEGEEVNNSEEEISLENTTTRNVLL.

Belongs to the G-protein coupled receptor 2 family. Mth subfamily. In terms of assembly, homodimer.

It is found in the cell membrane. In terms of biological role, involved in biological aging and stress response. Essential for adult survival. Required in the presynaptic motor neuron to up-regulate neurotransmitter exocytosis at larval glutamatergic neuromuscular junctions (NMJs). Regulates a step associated with docking and clustering of vesicles at release sites. SP/Acp70A and sun are agonists that activate mth in vitro. This Drosophila melanogaster (Fruit fly) protein is G-protein coupled receptor Mth (mth).